The chain runs to 198 residues: MAEKQTAKRNRREEILQSLALMLESSDGSQRITTAKLAASVGVSEAALYRHFPSKTRMFDSLIEFIEDSLITRINLILKDEKDTSARLRLIVLLILGFGERNPGLTRILTGHALMFEQDRLQGRINQLFERIEAQLRQVLREKRMREGEGYATDETLLASQLLAFCEGMLSRFVRSEFKYRPTDDFDARWPLVAAQLQ.

The region spanning 10 to 70 (NRREEILQSL…SLIEFIEDSL (61 aa)) is the HTH tetR-type domain. A DNA-binding region (H-T-H motif) is located at residues 33-52 (TTAKLAASVGVSEAALYRHF). A coiled-coil region spans residues 117-144 (EQDRLQGRINQLFERIEAQLRQVLREKR).

Belongs to the nucleoid occlusion factor SlmA family. Homodimer. Interacts with FtsZ.

It localises to the cytoplasm. Its subcellular location is the nucleoid. Required for nucleoid occlusion (NO) phenomenon, which prevents Z-ring formation and cell division over the nucleoid. Acts as a DNA-associated cell division inhibitor that binds simultaneously chromosomal DNA and FtsZ, and disrupts the assembly of FtsZ polymers. SlmA-DNA-binding sequences (SBS) are dispersed on non-Ter regions of the chromosome, preventing FtsZ polymerization at these regions. The polypeptide is Nucleoid occlusion factor SlmA (Citrobacter koseri (strain ATCC BAA-895 / CDC 4225-83 / SGSC4696)).